Consider the following 296-residue polypeptide: 4-hydroxybenzoate octaprenyltransferase (296 aa).

The next 8 helical transmembrane spans lie at 29–49, 55–75, 102–122, 146–166, 169–189, 219–239, 241–261, and 275–295; these read IGIYLLLWPTLWSLWIAADGV, LLIFVLGVILMRAAGCVINDF, AWITFAVLVALSFGLVLLTNA, YYPQVVLGAAYSWGILMAFTA, GELPASAWLLFLANVLWTVAY, LIIGSLQGLTLLLLVLAGNRF, LGLCFYLGLAVAAACFVWEAW, and FLHNHWAGLAIFLGTVADYAL.

The protein belongs to the UbiA prenyltransferase family. It depends on Mg(2+) as a cofactor.

It localises to the cell inner membrane. The catalysed reaction is all-trans-octaprenyl diphosphate + 4-hydroxybenzoate = 4-hydroxy-3-(all-trans-octaprenyl)benzoate + diphosphate. Its pathway is cofactor biosynthesis; ubiquinone biosynthesis. In terms of biological role, catalyzes the prenylation of para-hydroxybenzoate (PHB) with an all-trans polyprenyl group. Mediates the second step in the final reaction sequence of ubiquinone-8 (UQ-8) biosynthesis, which is the condensation of the polyisoprenoid side chain with PHB, generating the first membrane-bound Q intermediate 3-octaprenyl-4-hydroxybenzoate. This chain is 4-hydroxybenzoate octaprenyltransferase, found in Pseudomonas aeruginosa (strain LESB58).